We begin with the raw amino-acid sequence, 521 residues long: Probable protein kinase UbiB (521 aa).

The Protein kinase domain occupies 119 to 497 (QFDETPIASA…QKRTNRLLQT (379 aa)). ATP is bound by residues 125 to 133 (IASASIAQV) and K151. The active-site Proton acceptor is the D286. The chain crosses the membrane as a helical span at residues 496–516 (QTIIYGGIGFVLGLLAMQLLV).

Belongs to the ABC1 family. UbiB subfamily.

The protein localises to the cell inner membrane. Its pathway is cofactor biosynthesis; ubiquinone biosynthesis [regulation]. Functionally, is probably a protein kinase regulator of UbiI activity which is involved in aerobic coenzyme Q (ubiquinone) biosynthesis. The protein is Probable protein kinase UbiB of Variovorax paradoxus (strain S110).